A 183-amino-acid polypeptide reads, in one-letter code: Transmembrane and coiled-coil domain-containing protein 2 (183 aa).

The chain crosses the membrane as a helical span at residues 54 to 74 (VQIILGISFLTLLAIGLFALW). The stretch at 127–150 (GLQEKILKKLQMVENKVRDLEGII) forms a coiled coil.

The protein resides in the membrane. The chain is Transmembrane and coiled-coil domain-containing protein 2 (Tmco2) from Mus musculus (Mouse).